Consider the following 232-residue polypeptide: Ribose-5-phosphate isomerase A (232 aa).

Substrate contacts are provided by residues 28-31, 83-86, and 96-99; these read TGST, DGAD, and KGGG. Residue glutamate 105 is the Proton acceptor of the active site. Lysine 123 is a substrate binding site.

It belongs to the ribose 5-phosphate isomerase family. Homodimer.

It carries out the reaction aldehydo-D-ribose 5-phosphate = D-ribulose 5-phosphate. It participates in carbohydrate degradation; pentose phosphate pathway; D-ribose 5-phosphate from D-ribulose 5-phosphate (non-oxidative stage): step 1/1. Catalyzes the reversible conversion of ribose-5-phosphate to ribulose 5-phosphate. This is Ribose-5-phosphate isomerase A from Rhodopseudomonas palustris (strain HaA2).